A 350-amino-acid chain; its full sequence is Ornithine cyclodeaminase (350 aa).

L-ornithine contacts are provided by R45 and K69. NAD(+) is bound by residues T84, R112, 139–140, D161, T202, 225–228, K232, and S293; these read AQ and VGGD. R112 provides a ligand contact to L-ornithine. D228 contacts L-ornithine. Residue D228 is the Proton donor/acceptor of the active site. Residue V294 coordinates L-ornithine. Residue K331 coordinates NAD(+).

This sequence belongs to the ornithine cyclodeaminase/mu-crystallin family. As to quaternary structure, homodimer. It depends on NAD(+) as a cofactor.

It catalyses the reaction L-ornithine = L-proline + NH4(+). It functions in the pathway amino-acid biosynthesis; L-proline biosynthesis; L-proline from L-ornithine: step 1/1. In terms of biological role, catalyzes the conversion of L-ornithine into L-proline with release of ammonia. Is likely involved in the L-ornithine degradation pathway that allows P.putida to utilize this compound as sole carbon and nitrogen source. This is Ornithine cyclodeaminase from Pseudomonas putida (strain ATCC 47054 / DSM 6125 / CFBP 8728 / NCIMB 11950 / KT2440).